The sequence spans 206 residues: MSCPEHIVQLMHKYLDGDILPEDETRLKEHLQSCEGCKKHLHEMEKSIALVQSTSHLTAPANFTANVLANLPKEKRTASINRWLKAHPFLVAAALFAILMGGSFFSSWKNDHDFSVSSQPNLVVKNNTVIVPEGEVVKGDVTVKNGKLIIEGKVDGDVTIVNGEKYTASAGQVTGQIHEINEVFDWIWYKIKSTGKSVFGVKESKE.

The Cytoplasmic segment spans residues 1 to 87; that stretch reads MSCPEHIVQL…ASINRWLKAH (87 aa). Residues His-30, Cys-34, and Cys-37 each contribute to the Zn(2+) site. Residues 88–108 traverse the membrane as a helical segment; that stretch reads PFLVAAALFAILMGGSFFSSW. Over 109 to 206 the chain is Extracellular; that stretch reads KNDHDFSVSS…SVFGVKESKE (98 aa).

The protein belongs to the zinc-associated anti-sigma factor (ZAS) superfamily. Anti-sigma-W factor family. It depends on Zn(2+) as a cofactor. Post-translationally, is processed by three successive proteolytic events. First, the extracellular region of RsiW is cleaved by PrsW (Site-1 cleavage) in response to cell envelope stresses. Next, it undergoes cleavage at an intramembrane site (Site-2 cleavage) mediated by RasP. This cleavage uncovers a cryptic proteolytic tag with conserved alanine residues in the transmembrane segment, that is recognized mainly by the ClpXP protease, which completely degrades the protein in the cytoplasm and leads to the induction of the sigma-W-controlled genes.

Its subcellular location is the membrane. Its function is as follows. Is the anti-sigma factor for SigW. The presence of RsiW leads to the inactivation of SigW, and its proteolytic destruction to sigma-W activation. This is Anti-sigma-W factor RsiW (rsiW) from Bacillus licheniformis (strain ATCC 14580 / DSM 13 / JCM 2505 / CCUG 7422 / NBRC 12200 / NCIMB 9375 / NCTC 10341 / NRRL NRS-1264 / Gibson 46).